We begin with the raw amino-acid sequence, 650 residues long: Acetoacetyl-coenzyme A synthetase (650 aa).

199–202 (YNGK) lines the CoA pocket. ATP is bound by residues 392-394 (GSP), Asp-504, Arg-519, and Arg-530. Mg(2+) is bound at residue Val-546. Arg-587 contacts CoA. Lys-612 bears the N6-acetyllysine mark.

This sequence belongs to the ATP-dependent AMP-binding enzyme family. Mg(2+) is required as a cofactor. Post-translationally, acetylated. Deacetylation by the SIR2-homolog deacetylase activates the enzyme.

It catalyses the reaction acetoacetate + ATP + CoA = acetoacetyl-CoA + AMP + diphosphate. It participates in biopolymer metabolism; poly-(R)-3-hydroxybutanoate degradation. Catalyzes the conversion of acetoacetate into acetoacetyl-CoA. Is involved in poly-3-hydroxybutyrate (PHB) degradation, which allows growth of R.meliloti on PHB cycle intermediates. This chain is Acetoacetyl-coenzyme A synthetase, found in Rhizobium meliloti (strain 1021) (Ensifer meliloti).